The chain runs to 516 residues: Exodeoxyribonuclease 7 large subunit (516 aa).

The protein belongs to the XseA family. Heterooligomer composed of large and small subunits.

The protein localises to the cytoplasm. It carries out the reaction Exonucleolytic cleavage in either 5'- to 3'- or 3'- to 5'-direction to yield nucleoside 5'-phosphates.. In terms of biological role, bidirectionally degrades single-stranded DNA into large acid-insoluble oligonucleotides, which are then degraded further into small acid-soluble oligonucleotides. This Chlamydia trachomatis serovar L2 (strain ATCC VR-902B / DSM 19102 / 434/Bu) protein is Exodeoxyribonuclease 7 large subunit.